The following is a 481-amino-acid chain: Beta-amyrin 28-monooxygenase (481 aa).

A helical transmembrane segment spans residues 4–24 (FYVPLLSLFVLFVSLSFYFLF). Cys-428 serves as a coordination point for heme.

It belongs to the cytochrome P450 family. It depends on heme as a cofactor.

It is found in the membrane. The enzyme catalyses beta-amyrin + 3 reduced [NADPH--hemoprotein reductase] + 3 O2 = oleanolate + 3 oxidized [NADPH--hemoprotein reductase] + 4 H2O + 4 H(+). In terms of biological role, catalyzes the oxidation of the methyl group to a carboxyl group at the C-28 position of beta-amyrin to form oleanolate. The protein is Beta-amyrin 28-monooxygenase of Kalopanax septemlobus (Castor aralia).